Reading from the N-terminus, the 346-residue chain is Hydroxymethylglutaryl-CoA synthase (346 aa).

Asp28 contributes to the (3S)-3-hydroxy-3-methylglutaryl-CoA binding site. Glu80 (proton donor/acceptor) is an active-site residue. Residues Cys112 and Thr153 each coordinate (3S)-3-hydroxy-3-methylglutaryl-CoA. Catalysis depends on Cys112, which acts as the Acyl-thioester intermediate. Arg199 serves as a coordination point for CoA. (3S)-3-hydroxy-3-methylglutaryl-CoA-binding residues include Thr201 and His234. The active-site Proton donor/acceptor is the His234. Lys239 contributes to the CoA binding site. The (3S)-3-hydroxy-3-methylglutaryl-CoA site is built by Lys243, Asn266, and Ser296.

The protein belongs to the thiolase-like superfamily. Archaeal HMG-CoA synthase family. Interacts with acetoacetyl-CoA thiolase that catalyzes the precedent step in the pathway and with a DUF35 protein. The acetoacetyl-CoA thiolase/HMG-CoA synthase complex channels the intermediate via a fused CoA-binding site, which allows for efficient coupling of the endergonic thiolase reaction with the exergonic HMGCS reaction.

It catalyses the reaction acetoacetyl-CoA + acetyl-CoA + H2O = (3S)-3-hydroxy-3-methylglutaryl-CoA + CoA + H(+). It functions in the pathway metabolic intermediate biosynthesis; (R)-mevalonate biosynthesis; (R)-mevalonate from acetyl-CoA: step 2/3. In terms of biological role, catalyzes the condensation of acetyl-CoA with acetoacetyl-CoA to form 3-hydroxy-3-methylglutaryl-CoA (HMG-CoA). Functions in the mevalonate (MVA) pathway leading to isopentenyl diphosphate (IPP), a key precursor for the biosynthesis of isoprenoid compounds that are building blocks of archaeal membrane lipids. The protein is Hydroxymethylglutaryl-CoA synthase of Methanothermobacter thermautotrophicus (strain ATCC 29096 / DSM 1053 / JCM 10044 / NBRC 100330 / Delta H) (Methanobacterium thermoautotrophicum).